The sequence spans 319 residues: uncharacterized protein (319 aa).

This is an uncharacterized protein from Bacillus subtilis (strain 168).